Consider the following 154-residue polypeptide: Troponin C, isoallergen Bla g 6.0301 (154 aa).

EF-hand domains lie at 11–46, 47–82, 87–122, and 123–154; these read EQIS…MGQP, FNRR…FIIE, AMEK…LDEQ, and LTSD…MMTG. Residues D60, D62, S64, R66, and E71 each coordinate Ca(2+). Residues D136, D138, S140, T142, and E147 each coordinate Ca(2+).

Belongs to the troponin C family.

Troponin is the central regulatory protein of striated muscle contraction. It consists of three components: Troponin-I (Tn-I) which is the inhibitor of actomyosin ATPase, Troponin-T (Tn-T) which contains the binding site for tropomyosin and Troponin-C (Tn-C). The binding of calcium to Tn-C abolishes the inhibitory action of Tn on actin filaments. The chain is Troponin C, isoallergen Bla g 6.0301 from Blattella germanica (German cockroach).